We begin with the raw amino-acid sequence, 975 residues long: Sporulation-specific protein 22 (975 aa).

The protein belongs to the SPO22 family.

Its function is as follows. Involved in chromosome segregation during sporulation. This Saccharomyces cerevisiae (strain ATCC 204508 / S288c) (Baker's yeast) protein is Sporulation-specific protein 22 (SPO22).